A 221-amino-acid polypeptide reads, in one-letter code: uncharacterized protein (221 aa).

The segment at residues 77–96 (YRERAVELGVPERAILVEPN) is a DNA-binding region (H-T-H motif).

The protein to E.coli YdcF.

In terms of biological role, the imp locus inhibits the extrachromosomal maintenance of the streptomyces plasmid SLP1. May function as a transcriptional activator. This is an uncharacterized protein from Streptomyces coelicolor (strain ATCC BAA-471 / A3(2) / M145).